Reading from the N-terminus, the 21-residue chain is Peptide PGLa-R5 (21 aa).

L21 is subject to Leucine amide.

In terms of tissue distribution, expressed by the skin glands.

The protein resides in the secreted. Its function is as follows. Antimicrobial peptide. The protein is Peptide PGLa-R5 of Xenopus ruwenzoriensis (Uganda clawed frog).